Here is a 253-residue protein sequence, read N- to C-terminus: uncharacterized protein (253 aa).

This is an uncharacterized protein from Mycobacterium bovis (strain ATCC BAA-935 / AF2122/97).